The following is an 89-amino-acid chain: uncharacterized protein (89 aa).

An N-terminal signal peptide occupies residues 1–27; sequence MKKAAAVLLSLGLVFGFSYGAGHVAEA.

This is an uncharacterized protein from Bacillus subtilis (strain 168).